A 311-amino-acid polypeptide reads, in one-letter code: Apulose-4-phosphate transketolase subunit B (311 aa).

The protein belongs to the transketolase family. Probable heterodimer composed of AptA and AptB. It depends on thiamine diphosphate as a cofactor.

It catalyses the reaction apulose 4-phosphate + D-glyceraldehyde 3-phosphate = D-xylulose 5-phosphate + dihydroxyacetone phosphate. Its pathway is carbohydrate metabolism. Involved in catabolism of D-apiose. Catalyzes the transfer of the glycolaldehyde group from apulose-4-phosphate to D-glyceraldehyde 3-phosphate, generating dihydroxyacetone phosphate and D-xylulose-5-phosphate. The polypeptide is Apulose-4-phosphate transketolase subunit B (Actinobacillus succinogenes (strain ATCC 55618 / DSM 22257 / CCUG 43843 / 130Z)).